Here is a 66-residue protein sequence, read N- to C-terminus: Large ribosomal subunit protein bL33c (66 aa).

This sequence belongs to the bacterial ribosomal protein bL33 family.

It is found in the plastid. The protein localises to the chloroplast. The sequence is that of Large ribosomal subunit protein bL33c from Drimys granadensis.